Consider the following 473-residue polypeptide: PTS system trehalose-specific EIIBC component (473 aa).

Positions 1–89 (MMSKINQTDI…IASTGQAQVD (89 aa)) constitute a PTS EIIB type-1 domain. Over 1-110 (MMSKINQTDI…MKWHEQLISH (110 aa)) the chain is Cytoplasmic. Cys-29 acts as the Phosphocysteine intermediate; for EIIB activity in catalysis. Cys-29 carries the phosphocysteine; by EIIA modification. The PTS EIIC type-1 domain occupies 109–473 (SHFAVIFFPL…KYRLGTLDIV (365 aa)). Residues 111–131 (FAVIFFPLLPALISGGLILGF) form a helical membrane-spanning segment. Residues 132 to 158 (RNVIGDLPMSNGQTLAQMYPSLQTIYD) are Periplasmic-facing. The chain crosses the membrane as a helical span at residues 159-179 (FLWLIGEAIFFYLPVGICWSA). The Cytoplasmic segment spans residues 180–187 (VKKMGGTP). Residues 188–208 (ILGIVLGVTLVSPQLMNAYLL) traverse the membrane as a helical segment. Residues 209 to 225 (GQQLPEVWDFGMFSIAK) are Periplasmic-facing. Residues 226–246 (VGYQAQVIPALLAGLALGVIE) form a helical membrane-spanning segment. The Cytoplasmic segment spans residues 247 to 258 (TRLKRIVPDYLY). The helical transmembrane segment at 259 to 279 (LVVVPVCSLILAVFLAHALIG) threads the bilayer. Residues 280 to 300 (PFGRMIGDGVAFAVRHLMTGS) lie on the Periplasmic side of the membrane. Residues 301-321 (FAPIGAALFGFLYAPLVITGV) traverse the membrane as a helical segment. Over 322-340 (HQTTLAIDLQMIQSMGGTP) the chain is Cytoplasmic. Residues 341–361 (VWPLIALSNIAQGSAVIGIII) traverse the membrane as a helical segment. Over 362–370 (SSRKHNERE) the chain is Periplasmic. Residues 371–391 (ISVPAAISAWLGVTEPAMYGI) traverse the membrane as a helical segment. Residues 392 to 398 (NLKYRFP) are Cytoplasmic-facing. The chain crosses the membrane as a helical span at residues 399 to 419 (MLCAMIGSGLAGLLCGLNGVM). Residues 420–440 (ANGIGVGGLPGILSIQPSYWQ) are Periplasmic-facing. The chain crosses the membrane as a helical span at residues 441–461 (VFALAMAIAIIIPIVLTSFIY). At 462–473 (QRKYRLGTLDIV) the chain is on the cytoplasmic side.

It is found in the cell inner membrane. The catalysed reaction is alpha,alpha-trehalose(out) + N(pros)-phospho-L-histidyl-[protein] = alpha,alpha-trehalose 6-phosphate(in) + L-histidyl-[protein]. Its function is as follows. The phosphoenolpyruvate-dependent sugar phosphotransferase system (sugar PTS), a major carbohydrate active transport system, catalyzes the phosphorylation of incoming sugar substrates concomitantly with their translocation across the cell membrane. This system is involved in trehalose transport at low osmolarity. This Escherichia coli (strain K12) protein is PTS system trehalose-specific EIIBC component (treB).